The following is a 661-amino-acid chain: Tegument protein UL46 homolog (661 aa).

Residues 1–31 (MFSRFARSFSSDDRTRKSYDGSYQSFNAGER) are disordered. Over residues 10–19 (SSDDRTRKSY) the composition is skewed to basic and acidic residues. 2 helical membrane-spanning segments follow: residues 299–319 (AGTGVAFILAATTASALTALL) and 339–359 (AAIVAAVELITLLHHHFQYLI).

Belongs to the herpesviridae HHV-1 VP11/12 protein family. Post-translationally, phosphorylated by host LCK. The phosphorylation seems to be lymphocyte-specific.

The protein resides in the virion tegument. It localises to the host cytoplasm. Its subcellular location is the host membrane. Its function is as follows. Plays a role in the activation of the host PI3K/AKT pathway to promote cell survival. Interacts with and activates PI3KR1 in order to phosphorylate host AKT on its activating residues. Activates the host AP-1 pathway by triggering phosphorylation of host ERK1/2. Participates in host BIM and BAD phosphorylation, leading to apoptosis inhibition. The protein is Tegument protein UL46 homolog of Varicella-zoster virus (strain Oka vaccine) (HHV-3).